Here is a 174-residue protein sequence, read N- to C-terminus: Shikimate kinase 2 (174 aa).

ATP is bound at residue 12–17 (GCGKTT). Residues Thr-16 and Asp-32 each contribute to the Mg(2+) site. Asp-34, Arg-58, and Gly-79 together coordinate substrate. The interval 112–126 (QAAPEEDLRPTLTGK) is LID domain. Arg-120 serves as a coordination point for ATP. Residue Arg-139 coordinates substrate.

It belongs to the shikimate kinase family. AroL subfamily. Monomer. Mg(2+) is required as a cofactor.

Its subcellular location is the cytoplasm. It carries out the reaction shikimate + ATP = 3-phosphoshikimate + ADP + H(+). It functions in the pathway metabolic intermediate biosynthesis; chorismate biosynthesis; chorismate from D-erythrose 4-phosphate and phosphoenolpyruvate: step 5/7. Its function is as follows. Catalyzes the specific phosphorylation of the 3-hydroxyl group of shikimic acid using ATP as a cosubstrate. This chain is Shikimate kinase 2, found in Shigella dysenteriae serotype 1 (strain Sd197).